The sequence spans 704 residues: Urea-proton symporter DUR3 (704 aa).

The next 15 helical transmembrane spans lie at 39–59, 80–100, 115–135, 159–179, 192–212, 216–236, 291–311, 336–356, 388–408, 435–455, 461–481, 486–506, 527–547, 590–610, and 622–642; these read YAVILGFGAFFAVFTSFLVWL, VKTGLIASVIVSQWTWAATIL, FWYASGATIQVLLFGVMAIEI, IVFLVFCLATNVVVTAMLLLG, LYAASFLIPLGVVVYTLAGGL, FLASYVHSVIVHVALVVFVFL, SSGGAVFGLINIVGNFGTVFV, LVWFAVPFSLATSLGLGALAL, LTMLFMAVTSAGSSELIAVSS, AVLGFGCFMGILAVVLNKAGV, YLAMGVLIGSAVIPIAFMLLW, AFGAILGATSGCVFGIITWLT, LAGNLVAILTGGLIHAVCSLV, AWIVKWGLVFTILIVVIWPVL, and FWFWAIVAIAWGTIGSIVIIG.

It belongs to the sodium:solute symporter (SSF) (TC 2.A.21) family. Expressed in root rhizodermis, including root hairs and cortex in more basal root zones. Expressed in shoots.

The protein resides in the cell membrane. High-affinity urea-proton symporter involved in the active transport of urea across the plasma membrane into root cells. May play an important role in urea uptake by plant cells at low external urea concentrations. The polypeptide is Urea-proton symporter DUR3 (DUR3) (Arabidopsis thaliana (Mouse-ear cress)).